The following is an 84-amino-acid chain: Small ribosomal subunit protein bS18A (84 aa).

The protein belongs to the bacterial ribosomal protein bS18 family. As to quaternary structure, part of the 30S ribosomal subunit. Forms a tight heterodimer with protein bS6.

In terms of biological role, binds as a heterodimer with protein bS6 to the central domain of the 16S rRNA, where it helps stabilize the platform of the 30S subunit. The protein is Small ribosomal subunit protein bS18A of Mycobacterium marinum (strain ATCC BAA-535 / M).